The sequence spans 378 residues: UPF0754 membrane protein BCAH820_0954 (378 aa).

Transmembrane regions (helical) follow at residues 1–21 and 357–377; these read MNIW…GGFT and YLGA…LLFL.

The protein belongs to the UPF0754 family.

Its subcellular location is the cell membrane. This Bacillus cereus (strain AH820) protein is UPF0754 membrane protein BCAH820_0954.